The following is a 469-amino-acid chain: Repressible acid phosphatase (469 aa).

An N-terminal signal peptide occupies residues 1 to 16 (MLSILLSLLSLSGTHA). 2 N-linked (GlcNAc...) asparagine glycosylation sites follow: Asn-23 and Asn-31. His-77 functions as the Nucleophile in the catalytic mechanism. N-linked (GlcNAc...) asparagine glycans are attached at residues Asn-129, Asn-201, Asn-229, Asn-250, and Asn-317. Asp-340 serves as the catalytic Proton donor. Asn-392 and Asn-447 each carry an N-linked (GlcNAc...) asparagine glycan.

The protein belongs to the histidine acid phosphatase family. Glycosylated during secretion across the membrane.

It is found in the secreted. The catalysed reaction is a phosphate monoester + H2O = an alcohol + phosphate. In Kluyveromyces lactis (strain ATCC 8585 / CBS 2359 / DSM 70799 / NBRC 1267 / NRRL Y-1140 / WM37) (Yeast), this protein is Repressible acid phosphatase (PHO5).